The sequence spans 219 residues: DnaJ homolog subfamily C member 30, mitochondrial (219 aa).

The transit peptide at 1 to 38 (MAAARCLGWTLSPLWRWWQVRGLPPSSATGLCSRGRTY) directs the protein to the mitochondrion. One can recognise a J domain in the interval 42–107 (ALYELLGVPS…ILRRKYDRGL (66 aa)). The segment at 109-148 (SDQDLRGPGVKPSKTPVADPAPPRPPPYTPRAPGGSRASP) is disordered. A compositionally biased stretch (pro residues) spans 127–138 (DPAPPRPPPYTP). Residues 202-218 (ATFFVVLFLIFVFVGFR) form a helical membrane-spanning segment.

As to quaternary structure, associates with the ATP synthase complex. Interacts with MT-ATP6; interaction is direct. Interacts with ATP5MC2; interaction is direct. In brain, expressed in gray matter structures.

The protein resides in the mitochondrion inner membrane. Its function is as follows. Mitochondrial protein enriched in neurons that acts as a regulator of mitochondrial respiration. Associates with the ATP synthase complex and facilitates ATP synthesis. May be a chaperone protein involved in the turnover of the subunits of mitochondrial complex I N-module. It facilitates the degradation of N-module subunits damaged by oxidative stress, and contributes to complex I functional efficiency. This is DnaJ homolog subfamily C member 30, mitochondrial from Mus musculus (Mouse).